We begin with the raw amino-acid sequence, 200 residues long: Small ribosomal subunit protein uS4c (200 aa).

The 64-residue stretch at M91–N154 folds into the S4 RNA-binding domain.

It belongs to the universal ribosomal protein uS4 family. As to quaternary structure, part of the 30S ribosomal subunit. Contacts protein S5. The interaction surface between S4 and S5 is involved in control of translational fidelity.

It is found in the plastid. The protein resides in the chloroplast. In terms of biological role, one of the primary rRNA binding proteins, it binds directly to 16S rRNA where it nucleates assembly of the body of the 30S subunit. Its function is as follows. With S5 and S12 plays an important role in translational accuracy. The protein is Small ribosomal subunit protein uS4c (rps4) of Oltmannsiellopsis viridis (Marine flagellate).